The chain runs to 268 residues: Enoyl-[acyl-carrier-protein] reductase [NADH] (268 aa).

NAD(+)-binding positions include 20-21 (SI), 64-65 (DV), and 95-96 (IA). Tyr157 is a binding site for substrate. NAD(+)-binding residues include Lys164 and Ile193.

This sequence belongs to the short-chain dehydrogenases/reductases (SDR) family. FabI subfamily. As to quaternary structure, homodimer. Homotetramer.

It carries out the reaction a 2,3-saturated acyl-[ACP] + NAD(+) = a (2E)-enoyl-[ACP] + NADH + H(+). The catalysed reaction is a 2,3-saturated acyl-CoA + NAD(+) = a (2E)-enoyl-CoA + NADH + H(+). Its pathway is lipid metabolism; mycolic acid biosynthesis. In terms of biological role, enoyl-ACP reductase of the type II fatty acid syntase (FAS-II) system, which is involved in the biosynthesis of mycolic acids, a major component of mycobacterial cell walls. Catalyzes the NADH-dependent reduction of the double bond of 2-trans-enoyl-[acyl-carrier protein], an essential step in the fatty acid elongation cycle of the FAS-II pathway. Shows preference for long-chain fatty acyl thioester substrates, and can also use 2-trans-enoyl-CoAs as alternative substrates. The mycobacterial FAS-II system utilizes the products of the FAS-I system as primers to extend fatty acyl chain lengths up to C56, forming the meromycolate chain that serves as the precursor for final mycolic acids. This Mycobacterium avium protein is Enoyl-[acyl-carrier-protein] reductase [NADH].